The sequence spans 575 residues: Lysine--tRNA ligase (575 aa).

Mg(2+) contacts are provided by Glu412 and Glu419.

The protein belongs to the class-II aminoacyl-tRNA synthetase family. In terms of assembly, homodimer. It depends on Mg(2+) as a cofactor.

It localises to the cytoplasm. It carries out the reaction tRNA(Lys) + L-lysine + ATP = L-lysyl-tRNA(Lys) + AMP + diphosphate. The protein is Lysine--tRNA ligase of Bacteroides fragilis (strain ATCC 25285 / DSM 2151 / CCUG 4856 / JCM 11019 / LMG 10263 / NCTC 9343 / Onslow / VPI 2553 / EN-2).